Consider the following 168-residue polypeptide: S-ribosylhomocysteine lyase (168 aa).

Fe cation is bound by residues H54, H58, and C128.

The protein belongs to the LuxS family. In terms of assembly, homodimer. The cofactor is Fe cation.

It carries out the reaction S-(5-deoxy-D-ribos-5-yl)-L-homocysteine = (S)-4,5-dihydroxypentane-2,3-dione + L-homocysteine. Involved in the synthesis of autoinducer 2 (AI-2) which is secreted by bacteria and is used to communicate both the cell density and the metabolic potential of the environment. The regulation of gene expression in response to changes in cell density is called quorum sensing. Catalyzes the transformation of S-ribosylhomocysteine (RHC) to homocysteine (HC) and 4,5-dihydroxy-2,3-pentadione (DPD). This chain is S-ribosylhomocysteine lyase, found in Neisseria gonorrhoeae (strain ATCC 700825 / FA 1090).